A 312-amino-acid chain; its full sequence is Ribosomal RNA small subunit methyltransferase H (312 aa).

S-adenosyl-L-methionine is bound by residues G33–Y35, D51, F78, D97, and Q104.

Belongs to the methyltransferase superfamily. RsmH family.

The protein localises to the cytoplasm. It carries out the reaction cytidine(1402) in 16S rRNA + S-adenosyl-L-methionine = N(4)-methylcytidine(1402) in 16S rRNA + S-adenosyl-L-homocysteine + H(+). In terms of biological role, specifically methylates the N4 position of cytidine in position 1402 (C1402) of 16S rRNA. The chain is Ribosomal RNA small subunit methyltransferase H from Orientia tsutsugamushi (strain Boryong) (Rickettsia tsutsugamushi).